Reading from the N-terminus, the 202-residue chain is Alpha-1-acid glycoprotein (202 aa).

The first 18 residues, 1-18 (MALLWALAVLSHLPLLDA), serve as a signal peptide directing secretion. N-linked (GlcNAc...) asparagine glycans are attached at residues Asn-34, Asn-57, Asn-94, Asn-104, and Asn-136. A disulfide bridge connects residues Cys-91 and Cys-184.

The protein belongs to the calycin superfamily. Lipocalin family.

It localises to the secreted. Its function is as follows. Functions as a transport protein in the blood stream. Binds various ligands in the interior of its beta-barrel domain. Appears to function in modulating the activity of the immune system during the acute-phase reaction. The polypeptide is Alpha-1-acid glycoprotein (ORM1) (Bos taurus (Bovine)).